Here is a 141-residue protein sequence, read N- to C-terminus: ATP synthase epsilon chain (141 aa).

It belongs to the ATPase epsilon chain family. In terms of assembly, F-type ATPases have 2 components, CF(1) - the catalytic core - and CF(0) - the membrane proton channel. CF(1) has five subunits: alpha(3), beta(3), gamma(1), delta(1), epsilon(1). CF(0) has three main subunits: a, b and c.

Its subcellular location is the cell inner membrane. Its function is as follows. Produces ATP from ADP in the presence of a proton gradient across the membrane. The sequence is that of ATP synthase epsilon chain from Pseudomonas aeruginosa (strain LESB58).